The chain runs to 476 residues: MIEDKRLTDTELEAITDRITGDWVSRAAVDFADAVAFHESLPPHKRFAAVLENAEAVLCQPRAGVPRLDEHVELLQHLDEEGGADLLPTTIDSYTRDNAYEKAAEGLARSRETDSSELNGFPAVNHGVEGCREVVRRVDAPVQVRHGTPDARLLAAVTLAGGFQSFEGGPITYNLPYTSAYDLETTIEYWQYVDRLCGAYTERGVTINREPFGPLTGTLVPPSIAIAIVTIEGLLAATQGVRSVTLGYGQVGNLVQDVAAVRAMAAIGAEYLPDSVTVTTVLHQWMGGFPRDEARAHGVIGLAGATAALVEPTKVITKSPQEAVGVPTAESNAAGLRTTDQVLRMLDEQSITLDGVDREQALIERSVRSLLDAVYEAGDGDIARGTVRAFDAGTLDIPFPPSDAAAGDVLPARDDDGRVRLLKFGAVALDDETKRIHRARLDRRADTEGRELSFRMVADDVSAVSDGRLIGRPGDD.

R62 is an L-glutamate binding site. G64 contacts adenosylcob(III)alamin. An L-glutamate-binding site is contributed by R96. Residue N119 participates in adenosylcob(III)alamin binding. L-glutamate-binding positions include 145 to 146 (RH), E167, and Y173. Adenosylcob(III)alamin is bound at residue P176. Position 177 (Y177) interacts with L-glutamate. Adenosylcob(III)alamin-binding residues include F289, K318, and E322.

Belongs to the methylaspartate mutase GlmE subunit family. As to quaternary structure, heterotetramer composed of 2 epsilon subunits (GlmE) and 2 sigma subunits (GlmS). GlmE exists as a homodimer and GlmS as a monomer. Adenosylcob(III)alamin serves as cofactor.

It catalyses the reaction (2S,3S)-3-methyl-L-aspartate = L-glutamate. Its pathway is amino-acid degradation; L-glutamate degradation via mesaconate pathway; acetate and pyruvate from L-glutamate: step 1/4. Functionally, catalyzes the carbon skeleton rearrangement of L-glutamate to L-threo-3-methylaspartate ((2S,3S)-3-methylaspartate). The sequence is that of Glutamate mutase epsilon subunit from Halobacterium salinarum (strain ATCC 700922 / JCM 11081 / NRC-1) (Halobacterium halobium).